We begin with the raw amino-acid sequence, 397 residues long: Carbamoyl phosphate synthase small chain (397 aa).

Residues 1–204 (MKHVLRKEKT…NAKLKEKIWH (204 aa)) form a CPSase region. Residues serine 57, glycine 252, and glycine 254 each coordinate L-glutamine. The 188-residue stretch at 204–391 (HVVVYDFGVK…IKLMKKSYNS (188 aa)) folds into the Glutamine amidotransferase type-1 domain. The active-site Nucleophile is the cysteine 280. Positions 281, 284, 322, and 325 each coordinate L-glutamine. Active-site residues include histidine 364 and glutamate 366.

Belongs to the CarA family. Composed of two chains; the small (or glutamine) chain promotes the hydrolysis of glutamine to ammonia, which is used by the large (or ammonia) chain to synthesize carbamoyl phosphate. Tetramer of heterodimers (alpha,beta)4.

The enzyme catalyses hydrogencarbonate + L-glutamine + 2 ATP + H2O = carbamoyl phosphate + L-glutamate + 2 ADP + phosphate + 2 H(+). It catalyses the reaction L-glutamine + H2O = L-glutamate + NH4(+). It functions in the pathway amino-acid biosynthesis; L-arginine biosynthesis; carbamoyl phosphate from bicarbonate: step 1/1. It participates in pyrimidine metabolism; UMP biosynthesis via de novo pathway; (S)-dihydroorotate from bicarbonate: step 1/3. In terms of biological role, small subunit of the glutamine-dependent carbamoyl phosphate synthetase (CPSase). CPSase catalyzes the formation of carbamoyl phosphate from the ammonia moiety of glutamine, carbonate, and phosphate donated by ATP, constituting the first step of 2 biosynthetic pathways, one leading to arginine and/or urea and the other to pyrimidine nucleotides. The small subunit (glutamine amidotransferase) binds and cleaves glutamine to supply the large subunit with the substrate ammonia. The protein is Carbamoyl phosphate synthase small chain of Buchnera aphidicola subsp. Baizongia pistaciae (strain Bp).